The following is a 555-amino-acid chain: Potassium-transporting ATPase potassium-binding subunit (555 aa).

A run of 10 helical transmembrane segments spans residues 2 to 22, 60 to 80, 130 to 150, 173 to 193, 246 to 266, 278 to 298, 374 to 394, 412 to 432, 483 to 503, and 525 to 545; these read IWVA…PTGI, QYAL…YFIF, IGIT…VMAF, VFLP…VPQT, MSNI…PFTY, ILFV…TTSE, AGFV…GLMV, LIAV…ALAL, LVMF…AASL, and GIFI…MLVL.

It belongs to the KdpA family. In terms of assembly, the system is composed of three essential subunits: KdpA, KdpB and KdpC.

Its subcellular location is the cell membrane. In terms of biological role, part of the high-affinity ATP-driven potassium transport (or Kdp) system, which catalyzes the hydrolysis of ATP coupled with the electrogenic transport of potassium into the cytoplasm. This subunit binds the extracellular potassium ions and delivers the ions to the membrane domain of KdpB through an intramembrane tunnel. This chain is Potassium-transporting ATPase potassium-binding subunit, found in Bacillus cereus (strain AH187).